The following is a 208-amino-acid chain: ATP-dependent Clp protease proteolytic subunit (208 aa).

S98 (nucleophile) is an active-site residue. The active site involves H123.

The protein belongs to the peptidase S14 family. In terms of assembly, fourteen ClpP subunits assemble into 2 heptameric rings which stack back to back to give a disk-like structure with a central cavity, resembling the structure of eukaryotic proteasomes.

It is found in the cytoplasm. The enzyme catalyses Hydrolysis of proteins to small peptides in the presence of ATP and magnesium. alpha-casein is the usual test substrate. In the absence of ATP, only oligopeptides shorter than five residues are hydrolyzed (such as succinyl-Leu-Tyr-|-NHMec, and Leu-Tyr-Leu-|-Tyr-Trp, in which cleavage of the -Tyr-|-Leu- and -Tyr-|-Trp bonds also occurs).. Its function is as follows. Cleaves peptides in various proteins in a process that requires ATP hydrolysis. Has a chymotrypsin-like activity. Plays a major role in the degradation of misfolded proteins. This Wolbachia pipientis subsp. Culex pipiens (strain wPip) protein is ATP-dependent Clp protease proteolytic subunit.